The primary structure comprises 157 residues: Endoribonuclease YbeY (157 aa).

3 residues coordinate Zn(2+): His-116, His-120, and His-126.

Belongs to the endoribonuclease YbeY family. It depends on Zn(2+) as a cofactor.

Its subcellular location is the cytoplasm. Its function is as follows. Single strand-specific metallo-endoribonuclease involved in late-stage 70S ribosome quality control and in maturation of the 3' terminus of the 16S rRNA. This chain is Endoribonuclease YbeY, found in Renibacterium salmoninarum (strain ATCC 33209 / DSM 20767 / JCM 11484 / NBRC 15589 / NCIMB 2235).